A 307-amino-acid polypeptide reads, in one-letter code: Acetyl-coenzyme A carboxylase carboxyl transferase subunit beta (307 aa).

Residues 28–297 enclose the CoA carboxyltransferase N-terminal domain; that stretch reads LWVKCPDTGQ…TPQPGTAPEP (270 aa). The segment at 286–307 is disordered; sequence RRTPQPGTAPEPTTPEPLPNAA. Residues 292 to 307 are compositionally biased toward pro residues; sequence GTAPEPTTPEPLPNAA.

Belongs to the AccD/PCCB family. As to quaternary structure, acetyl-CoA carboxylase is a heterohexamer composed of biotin carboxyl carrier protein (AccB), biotin carboxylase (AccC) and two subunits each of ACCase subunit alpha (AccA) and ACCase subunit beta (AccD).

It is found in the cytoplasm. The enzyme catalyses N(6)-carboxybiotinyl-L-lysyl-[protein] + acetyl-CoA = N(6)-biotinyl-L-lysyl-[protein] + malonyl-CoA. It participates in lipid metabolism; malonyl-CoA biosynthesis; malonyl-CoA from acetyl-CoA: step 1/1. Functionally, component of the acetyl coenzyme A carboxylase (ACC) complex. Biotin carboxylase (BC) catalyzes the carboxylation of biotin on its carrier protein (BCCP) and then the CO(2) group is transferred by the transcarboxylase to acetyl-CoA to form malonyl-CoA. This is Acetyl-coenzyme A carboxylase carboxyl transferase subunit beta from Methylorubrum extorquens (strain CM4 / NCIMB 13688) (Methylobacterium extorquens).